Here is a 195-residue protein sequence, read N- to C-terminus: Holliday junction branch migration complex subunit RuvA (195 aa).

The segment at 1–64 is domain I; sequence MIASIRGVIQ…EDALTLYGFS (64 aa). The interval 65–139 is domain II; the sequence is DNAQRSLFEQ…GKIDFRQLAA (75 aa). The flexible linker stretch occupies residues 139 to 143; it reads ASGST. Residues 144-195 are domain III; sequence SVSALDRELSEILVSLGYSAAEAAAAIASLPSDAPPTLEERLRLALRYFGSA.

Belongs to the RuvA family. In terms of assembly, homotetramer. Forms an RuvA(8)-RuvB(12)-Holliday junction (HJ) complex. HJ DNA is sandwiched between 2 RuvA tetramers; dsDNA enters through RuvA and exits via RuvB. An RuvB hexamer assembles on each DNA strand where it exits the tetramer. Each RuvB hexamer is contacted by two RuvA subunits (via domain III) on 2 adjacent RuvB subunits; this complex drives branch migration. In the full resolvosome a probable DNA-RuvA(4)-RuvB(12)-RuvC(2) complex forms which resolves the HJ.

The protein resides in the cytoplasm. Its function is as follows. The RuvA-RuvB-RuvC complex processes Holliday junction (HJ) DNA during genetic recombination and DNA repair, while the RuvA-RuvB complex plays an important role in the rescue of blocked DNA replication forks via replication fork reversal (RFR). RuvA specifically binds to HJ cruciform DNA, conferring on it an open structure. The RuvB hexamer acts as an ATP-dependent pump, pulling dsDNA into and through the RuvAB complex. HJ branch migration allows RuvC to scan DNA until it finds its consensus sequence, where it cleaves and resolves the cruciform DNA. This Chloroflexus aggregans (strain MD-66 / DSM 9485) protein is Holliday junction branch migration complex subunit RuvA.